The chain runs to 874 residues: Valine--tRNA ligase (874 aa).

Residues 51–61 (PNVTGVLHIGH) carry the 'HIGH' region motif. The short motif at 533 to 537 (KMSKS) is the 'KMSKS' region element. Lys536 contributes to the ATP binding site. Positions 813–873 (LVARLKKQLE…IKQELDLLEQ (61 aa)) form a coiled coil.

The protein belongs to the class-I aminoacyl-tRNA synthetase family. ValS type 1 subfamily. As to quaternary structure, monomer.

The protein resides in the cytoplasm. It carries out the reaction tRNA(Val) + L-valine + ATP = L-valyl-tRNA(Val) + AMP + diphosphate. Functionally, catalyzes the attachment of valine to tRNA(Val). As ValRS can inadvertently accommodate and process structurally similar amino acids such as threonine, to avoid such errors, it has a 'posttransfer' editing activity that hydrolyzes mischarged Thr-tRNA(Val) in a tRNA-dependent manner. The protein is Valine--tRNA ligase of Helicobacter pylori (strain ATCC 700392 / 26695) (Campylobacter pylori).